The following is a 568-amino-acid chain: Urease subunit alpha (568 aa).

Residues 133-568 (GGLDIHIHFN…ELPLAQRYLL (436 aa)) form the Urease domain. Positions 138, 140, and 217 each coordinate Ni(2+). Lys-217 carries the N6-carboxylysine modification. Residue His-219 coordinates substrate. His-246 and His-272 together coordinate Ni(2+). His-320 acts as the Proton donor in catalysis. Residue Asp-360 coordinates Ni(2+).

Belongs to the metallo-dependent hydrolases superfamily. Urease alpha subunit family. As to quaternary structure, heterotrimer of UreA (gamma), UreB (beta) and UreC (alpha) subunits. Three heterotrimers associate to form the active enzyme. It depends on Ni cation as a cofactor. Carboxylation allows a single lysine to coordinate two nickel ions.

The protein localises to the cytoplasm. The catalysed reaction is urea + 2 H2O + H(+) = hydrogencarbonate + 2 NH4(+). Its pathway is nitrogen metabolism; urea degradation; CO(2) and NH(3) from urea (urease route): step 1/1. The chain is Urease subunit alpha from Haloarcula marismortui (strain ATCC 43049 / DSM 3752 / JCM 8966 / VKM B-1809) (Halobacterium marismortui).